We begin with the raw amino-acid sequence, 262 residues long: Nickel import ATP-binding protein NikD (262 aa).

Residues 6–249 (LAIEGLTATT…PGHEVTRMLV (244 aa)) enclose the ABC transporter domain. 42–49 (GASGSGKS) is a binding site for ATP.

The protein belongs to the ABC transporter superfamily. Nickel importer (TC 3.A.1.5.3) family. As to quaternary structure, the complex is composed of two ATP-binding proteins (NikD and NikE), two transmembrane proteins (NikB and NikC) and a solute-binding protein (NikA).

It is found in the cell inner membrane. The catalysed reaction is Ni(2+)(out) + ATP + H2O = Ni(2+)(in) + ADP + phosphate + H(+). Part of the ABC transporter complex NikABCDE involved in nickel import. Responsible for energy coupling to the transport system. This is Nickel import ATP-binding protein NikD from Brucella abortus biovar 1 (strain 9-941).